The sequence spans 535 residues: T-complex protein 1 subunit beta (535 aa).

N-acetylalanine is present on A2. The residue at position 3 (S3) is a Phosphoserine. The residue at position 13 (K13) is an N6-acetyllysine. G44 lines the ADP pocket. ATP is bound at residue G44. Position 60 is a phosphoserine (S60). D97 lines the Mg(2+) pocket. ADP contacts are provided by G98, T99, T100, and S101. ATP is bound by residues G98, T99, and T100. Position 154 is an N6-acetyllysine (K154). ADP contacts are provided by S168 and S169. K181 bears the N6-acetyllysine mark. K248 is covalently cross-linked (Glycyl lysine isopeptide (Lys-Gly) (interchain with G-Cter in SUMO2)). Phosphoserine is present on S260. Position 261 is a phosphothreonine (T261). The ADP site is built by G410, E495, and K500. E495 and K500 together coordinate ATP.

This sequence belongs to the TCP-1 chaperonin family. Component of the chaperonin-containing T-complex (TRiC), a hexadecamer composed of two identical back-to-back stacked rings enclosing a protein folding chamber. Each ring is made up of eight different subunits: TCP1/CCT1, CCT2, CCT3, CCT4, CCT5, CCT6A/CCT6, CCT7, CCT8. Interacts with PACRG. Interacts with FLCN. Interacts with DLEC1. Interacts with SVEP1.

Its subcellular location is the cytoplasm. The enzyme catalyses ATP + H2O = ADP + phosphate + H(+). Its function is as follows. Component of the chaperonin-containing T-complex (TRiC), a molecular chaperone complex that assists the folding of actin, tubulin and other proteins upon ATP hydrolysis. The TRiC complex mediates the folding of WRAP53/TCAB1, thereby regulating telomere maintenance. As part of the TRiC complex may play a role in the assembly of BBSome, a complex involved in ciliogenesis regulating transports vesicles to the cilia. This chain is T-complex protein 1 subunit beta (Cct2), found in Rattus norvegicus (Rat).